A 610-amino-acid chain; its full sequence is Elongation factor 4 (610 aa).

Residues 11 to 193 (EKIRNFSIIA…QIVEKVPAPT (183 aa)) form the tr-type G domain. GTP is bound by residues 23–28 (DHGKST) and 140–143 (NKID).

This sequence belongs to the TRAFAC class translation factor GTPase superfamily. Classic translation factor GTPase family. LepA subfamily.

It localises to the cell membrane. The catalysed reaction is GTP + H2O = GDP + phosphate + H(+). Its function is as follows. Required for accurate and efficient protein synthesis under certain stress conditions. May act as a fidelity factor of the translation reaction, by catalyzing a one-codon backward translocation of tRNAs on improperly translocated ribosomes. Back-translocation proceeds from a post-translocation (POST) complex to a pre-translocation (PRE) complex, thus giving elongation factor G a second chance to translocate the tRNAs correctly. Binds to ribosomes in a GTP-dependent manner. In Streptococcus pyogenes serotype M12 (strain MGAS9429), this protein is Elongation factor 4.